The chain runs to 510 residues: Light-independent protochlorophyllide reductase subunit B (510 aa).

Asp36 serves as a coordination point for [4Fe-4S] cluster. Residue Asp296 is the Proton donor of the active site. Residue 431–432 (GM) coordinates substrate.

The protein belongs to the ChlB/BchB/BchZ family. As to quaternary structure, protochlorophyllide reductase is composed of three subunits; ChlL, ChlN and ChlB. Forms a heterotetramer of two ChlB and two ChlN subunits. It depends on [4Fe-4S] cluster as a cofactor.

It is found in the plastid. It localises to the chloroplast. It carries out the reaction chlorophyllide a + oxidized 2[4Fe-4S]-[ferredoxin] + 2 ADP + 2 phosphate = protochlorophyllide a + reduced 2[4Fe-4S]-[ferredoxin] + 2 ATP + 2 H2O. Its pathway is porphyrin-containing compound metabolism; chlorophyll biosynthesis (light-independent). In terms of biological role, component of the dark-operative protochlorophyllide reductase (DPOR) that uses Mg-ATP and reduced ferredoxin to reduce ring D of protochlorophyllide (Pchlide) to form chlorophyllide a (Chlide). This reaction is light-independent. The NB-protein (ChlN-ChlB) is the catalytic component of the complex. The chain is Light-independent protochlorophyllide reductase subunit B from Auxenochlorella protothecoides (Green microalga).